Consider the following 497-residue polypeptide: Probable malate:quinone oxidoreductase (497 aa).

This sequence belongs to the MQO family. FAD serves as cofactor.

The enzyme catalyses (S)-malate + a quinone = a quinol + oxaloacetate. The protein operates within carbohydrate metabolism; tricarboxylic acid cycle; oxaloacetate from (S)-malate (quinone route): step 1/1. This chain is Probable malate:quinone oxidoreductase, found in Flavobacterium johnsoniae (strain ATCC 17061 / DSM 2064 / JCM 8514 / BCRC 14874 / CCUG 350202 / NBRC 14942 / NCIMB 11054 / UW101) (Cytophaga johnsonae).